The following is a 277-amino-acid chain: Cis-3,4-dihydrophenanthrene-3,4-diol dehydrogenase (277 aa).

NAD(+) is bound by residues 10–37 and Asp60; that span reads FLTG…TVLD. Ser143 lines the substrate pocket. The active-site Proton acceptor is Tyr156. An NAD(+)-binding site is contributed by Lys160.

This sequence belongs to the short-chain dehydrogenases/reductases (SDR) family. As to quaternary structure, homotetramer.

The enzyme catalyses (3S,4R)-3,4-dihydrophenanthrene-3,4-diol + NAD(+) = phenanthrene-3,4-diol + NADH + H(+). Inhibited by heavy metal such as Hg(2+) and by p-chloromercuribenzoate. Involved in the degradation of phenanthrene. Catalyzes the oxidation of cis-phenanthrene dihydrodiol (PDD) to yield phenanthrenediol. It can use either NAD or NADP as electron acceptor, however NAD is preferred to NADP. This Alcaligenes faecalis protein is Cis-3,4-dihydrophenanthrene-3,4-diol dehydrogenase (phnB).